The sequence spans 344 residues: Dihydroorotase (344 aa).

Zn(2+) contacts are provided by H14 and H16. Substrate is bound by residues 16 to 18 and N42; that span reads HLR. Zn(2+) is bound by residues K100, H137, and H175. The residue at position 100 (K100) is an N6-carboxylysine. A substrate-binding site is contributed by H137. L220 provides a ligand contact to substrate. Residue D248 participates in Zn(2+) binding. D248 is a catalytic residue. 2 residues coordinate substrate: H252 and A264.

Belongs to the metallo-dependent hydrolases superfamily. DHOase family. Class II DHOase subfamily. As to quaternary structure, homodimer. It depends on Zn(2+) as a cofactor.

The enzyme catalyses (S)-dihydroorotate + H2O = N-carbamoyl-L-aspartate + H(+). It participates in pyrimidine metabolism; UMP biosynthesis via de novo pathway; (S)-dihydroorotate from bicarbonate: step 3/3. Catalyzes the reversible cyclization of carbamoyl aspartate to dihydroorotate. This chain is Dihydroorotase, found in Cupriavidus metallidurans (strain ATCC 43123 / DSM 2839 / NBRC 102507 / CH34) (Ralstonia metallidurans).